The sequence spans 1620 residues: ALK tyrosine kinase receptor (1620 aa).

Residues 1 to 18 (MGAIGLLWLLPLLLSTAA) form the signal peptide. Over 19-1038 (VGSGMGTGQR…PHLPLSLILS (1020 aa)) the chain is Extracellular. Positions 48–70 (RLQRKSLAVDFVVPSLFRVYARD) are heparin-binding region. Residues Asn-169, Asn-244, Asn-285, Asn-324, Asn-411, Asn-424, Asn-445, Asn-563, Asn-571, and Asn-627 are each glycosylated (N-linked (GlcNAc...) asparagine). An MAM 1 domain is found at 264–427 (LECSFDFPCE…DFFALKNCSE (164 aa)). Residues 437-473 (LQSSFTCWNGTVLQLGQACDFHQDCAQGEDESQMCRK) form the LDL-receptor class A domain. One can recognise an MAM 2 domain in the interval 478–636 (FYCNFEDGFC…NISISLDCYL (159 aa)). A disordered region spans residues 650–674 (PKSRNLFERNPNKELKPGENSPRQT). A compositionally biased stretch (basic and acidic residues) spans 654–666 (NLFERNPNKELKP). Cys-688 and Cys-701 are oxidised to a cystine. Asn-709 is a glycosylation site (N-linked (GlcNAc...) asparagine). Cysteines 783 and 794 form a disulfide. N-linked (GlcNAc...) asparagine glycosylation is found at Asn-808, Asn-863, Asn-864, and Asn-886. Cysteines 906 and 928 form a disulfide. Asn-986 carries an N-linked (GlcNAc...) asparagine glycan. 3 disulfide bridges follow: Cys-987-Cys-995, Cys-990-Cys-1006, and Cys-1008-Cys-1021. The segment at 987-1025 (CSHCEVDECHMDPESHKVICFCDHGTVLAEDGVSCIVSP) is EGF-like. A helical transmembrane segment spans residues 1039 to 1059 (VVTSALVAALVLAFSGIMIVY). The Cytoplasmic segment spans residues 1060–1620 (RRKHQELQAM…SKNSMNQPGP (561 aa)). Residues Tyr-1078, Tyr-1092, and Tyr-1096 each carry the phosphotyrosine modification. The region spanning 1116-1392 (ITLIRGLGHG…IEYCTQDPDV (277 aa)) is the Protein kinase domain. His-1124 contacts ATP. A Phosphotyrosine modification is found at Tyr-1131. ATP-binding positions include Lys-1150 and 1197 to 1199 (ELM). Asp-1249 functions as the Proton acceptor in the catalytic mechanism. Position 1270 (Asp-1270) interacts with ATP. Tyr-1278 is subject to Phosphotyrosine. Residues 1408-1463 (EEKVPVRPKDPEGVPPLLVSQQAKREEERSPAAPPPLPTTSSGKAAKKPTAAEISV) form a disordered region. A compositionally biased stretch (basic and acidic residues) spans 1410–1419 (KVPVRPKDPE). The residue at position 1507 (Tyr-1507) is a Phosphotyrosine. Residues 1514–1540 (KPTKKNNPIAKKEPHDRGNLGLEGSCT) are disordered. Tyr-1604 carries the post-translational modification Phosphotyrosine.

The protein belongs to the protein kinase superfamily. Tyr protein kinase family. Insulin receptor subfamily. Homodimer; homodimerizes following heparin- and ligand-binding. Interacts with CBL, IRS1, PIK3R1 and PLCG1. Interacts with FRS2 and SHC1. Interacts with PTN and MDK. Post-translationally, phosphorylated at tyrosine residues by autocatalysis, which activates kinase activity. In cells not stimulated by a ligand, receptor protein tyrosine phosphatase beta and zeta complex (PTPRB/PTPRZ1) dephosphorylates ALK at the sites in ALK that are undergoing autophosphorylation through autoactivation. Phosphorylation at Tyr-1507 is critical for SHC1 association. In terms of processing, N-glycosylated. As to expression, expressed in brain and CNS. Also expressed in the small intestine and testis, but not in normal lymphoid cells.

It is found in the cell membrane. The catalysed reaction is L-tyrosyl-[protein] + ATP = O-phospho-L-tyrosyl-[protein] + ADP + H(+). Activated upon ALKAL2 ligand-binding. ALKAL2-driven activation is coupled with heparin-binding. Following ligand-binding, homodimerizes and autophosphorylates, activating its kinase activity. Inactivated through dephosphorylation by receptor protein tyrosine phosphatase beta and zeta complex (PTPRB/PTPRZ1) when there is no stimulation by a ligand. Staurosporine, crizotinib and CH5424802 act as inhibitors of ALK kinase activity. Its function is as follows. Neuronal receptor tyrosine kinase that is essentially and transiently expressed in specific regions of the central and peripheral nervous systems and plays an important role in the genesis and differentiation of the nervous system. Also acts as a key thinness protein involved in the resistance to weight gain: in hypothalamic neurons, controls energy expenditure acting as a negative regulator of white adipose tissue lipolysis and sympathetic tone to fine-tune energy homeostasis. Following activation by ALKAL2 ligand at the cell surface, transduces an extracellular signal into an intracellular response. In contrast, ALKAL1 is not a potent physiological ligand for ALK. Ligand-binding to the extracellular domain induces tyrosine kinase activation, leading to activation of the mitogen-activated protein kinase (MAPK) pathway. Phosphorylates almost exclusively at the first tyrosine of the Y-x-x-x-Y-Y motif. Induces tyrosine phosphorylation of CBL, FRS2, IRS1 and SHC1, as well as of the MAP kinases MAPK1/ERK2 and MAPK3/ERK1. ALK activation may also be regulated by pleiotrophin (PTN) and midkine (MDK). PTN-binding induces MAPK pathway activation, which is important for the anti-apoptotic signaling of PTN and regulation of cell proliferation. MDK-binding induces phosphorylation of the ALK target insulin receptor substrate (IRS1), activates mitogen-activated protein kinases (MAPKs) and PI3-kinase, resulting also in cell proliferation induction. Drives NF-kappa-B activation, probably through IRS1 and the activation of the AKT serine/threonine kinase. Recruitment of IRS1 to activated ALK and the activation of NF-kappa-B are essential for the autocrine growth and survival signaling of MDK. This chain is ALK tyrosine kinase receptor, found in Homo sapiens (Human).